The following is a 392-amino-acid chain: L-rhamnonate dehydratase (392 aa).

Residues H22 and R48 each contribute to the substrate site. Residues D214, E240, and E268 each contribute to the Mg(2+) site. Catalysis depends on H318, which acts as the Proton acceptor. Residue E338 participates in substrate binding.

It belongs to the mandelate racemase/muconate lactonizing enzyme family. RhamD subfamily. As to quaternary structure, homooctamer; tetramer of dimers. The cofactor is Mg(2+).

The catalysed reaction is L-rhamnonate = 2-dehydro-3-deoxy-L-rhamnonate + H2O. Its function is as follows. Catalyzes the dehydration of L-rhamnonate to 2-keto-3-deoxy-L-rhamnonate (KDR). In Burkholderia ambifaria (strain ATCC BAA-244 / DSM 16087 / CCUG 44356 / LMG 19182 / AMMD) (Burkholderia cepacia (strain AMMD)), this protein is L-rhamnonate dehydratase.